The sequence spans 77 residues: Sec-independent protein translocase protein TatA (77 aa).

Residues Met1–Gly21 traverse the membrane as a helical segment. Residues Lys40–Ala77 are disordered. Basic and acidic residues predominate over residues Asp64 to Ala77.

The protein belongs to the TatA/E family. In terms of assembly, the Tat system comprises two distinct complexes: a TatABC complex, containing multiple copies of TatA, TatB and TatC subunits, and a separate TatA complex, containing only TatA subunits. Substrates initially bind to the TatABC complex, which probably triggers association of the separate TatA complex to form the active translocon.

It is found in the cell inner membrane. Part of the twin-arginine translocation (Tat) system that transports large folded proteins containing a characteristic twin-arginine motif in their signal peptide across membranes. TatA could form the protein-conducting channel of the Tat system. The chain is Sec-independent protein translocase protein TatA from Burkholderia thailandensis (strain ATCC 700388 / DSM 13276 / CCUG 48851 / CIP 106301 / E264).